The primary structure comprises 260 residues: Neuraminyllactose-binding hemagglutinin (260 aa).

The first 27 residues, 1–27 (MKTNGHFKDFAWKKCFLGASVVALLVG), serve as a signal peptide directing secretion. Cys-28 carries N-palmitoyl cysteine lipidation. A lipid anchor (S-diacylglycerol cysteine) is attached at Cys-28.

The protein resides in the cell outer membrane. In Helicobacter pylori (strain J99 / ATCC 700824) (Campylobacter pylori J99), this protein is Neuraminyllactose-binding hemagglutinin (hpaA).